Consider the following 407-residue polypeptide: Substance-P receptor (407 aa).

Over 1-31 (MDNVLPVDSDLSPNISTNTSEPNQFVQPAWQ) the chain is Extracellular. Residues asparagine 14 and asparagine 18 are each glycosylated (N-linked (GlcNAc...) asparagine). The helical transmembrane segment at 32-54 (IVLWAAAYTVIVVTSVVGNVVVM) threads the bilayer. The Cytoplasmic segment spans residues 55–64 (WIILAHKRMR). Residues 65–86 (TVTNYFLVNLAFAEASMAAFNT) traverse the membrane as a helical segment. Residues 87 to 106 (VVNFTYAVHNEWYYGLFYCK) are Extracellular-facing. Cysteines 105 and 180 form a disulfide. A helical membrane pass occupies residues 107-128 (FHNFFPIAAVFASIYSMTAVAF). Residues 129–148 (DRYMAIIHPLQPRLSATATK) lie on the Cytoplasmic side of the membrane. The chain crosses the membrane as a helical span at residues 149 to 169 (VVICVIWVLALLLAFPQGYYS). Topologically, residues 170-194 (TTETMPSRVVCMIEWPEHPNKIYEK) are extracellular. The chain crosses the membrane as a helical span at residues 195-219 (VYHICVTVLIYFLPLLVIGYAYTVV). Residue histidine 197 participates in CP-96345 binding. At 220-248 (GITLWASEIPGDSSDRYHEQVSAKRKVVK) the chain is on the cytoplasmic side. A helical transmembrane segment spans residues 249–270 (MMIVVVCTFAICWLPFHIFFLL). The Extracellular segment spans residues 271–283 (PYINPDLYLKKFI). A helical transmembrane segment spans residues 284–308 (QQVYLAIMWLAMSSTMYNPIIYCCL). Residues 309–407 (NDRFRLGFKH…SFSFSSNVLS (99 aa)) lie on the Cytoplasmic side of the membrane. A lipid anchor (S-palmitoyl cysteine) is attached at cysteine 322. A disordered region spans residues 364-407 (AHEEEPEDGPKATPSSLDLTSNCSSRSDSKTMTESFSFSSNVLS). Positions 376 to 407 (TPSSLDLTSNCSSRSDSKTMTESFSFSSNVLS) are enriched in polar residues.

It belongs to the G-protein coupled receptor 1 family. Interacts with ARRB1.

It localises to the cell membrane. This is a receptor for the tachykinin neuropeptide substance P. It is probably associated with G proteins that activate a phosphatidylinositol-calcium second messenger system. The rank order of affinity of this receptor to tachykinins is: substance P &gt; substance K &gt; neuromedin-K. This chain is Substance-P receptor (TACR1), found in Homo sapiens (Human).